A 307-amino-acid chain; its full sequence is Glutenin, low molecular weight subunit 1D1 (307 aa).

The N-terminal stretch at 1–23 is a signal peptide; it reads MKTFLVFALLAVAATSAIAQMET. Disordered regions lie at residues 31–88 and 105–126; these read RPWQ…ILPQ and PFSQ…QQQQ. Residues 43-88 are compositionally biased toward low complexity; the sequence is TFPQQPLFSQQQQQQLFPQQPSFSQQQPPFWQQQPPFSQQQPILPQ.

The protein belongs to the gliadin/glutenin family. In terms of assembly, disulfide-bridge linked aggregates. Expressed in endosperm, but not in husk and leaf tissues.

Its function is as follows. Glutenins are high-molecular weight seed storage proteins of wheat endosperm. Thought to be responsible for the visco-elastic property of wheat dough. The polypeptide is Glutenin, low molecular weight subunit 1D1 (Triticum aestivum (Wheat)).